We begin with the raw amino-acid sequence, 372 residues long: Putative aminopeptidase SgcX (372 aa).

Residues His-67 and Asp-180 each contribute to the a divalent metal cation site. Glu-212 (proton acceptor) is an active-site residue. A divalent metal cation is bound by residues Glu-213, Asp-235, and His-329.

Belongs to the peptidase M42 family. It depends on a divalent metal cation as a cofactor.

The chain is Putative aminopeptidase SgcX (sgcX) from Salmonella typhimurium (strain LT2 / SGSC1412 / ATCC 700720).